The primary structure comprises 411 residues: F-box/kelch-repeat protein At3g61590 (411 aa).

One can recognise an F-box domain in the interval 37–83; it reads FSMDSLLPDDLLERILSFLPIASIFRAGTVCKRWNEIVSSRRFLCNF. Kelch repeat units follow at residues 81–135, 137–178, 196–246, 251–299, 302–350, and 352–401; these read CNFS…SSCG, VCFM…MSTS, SIVK…ICNN, MIYS…LMNL, RLVI…EFDE, and FASS…FTGF.

As to quaternary structure, part of a SCF (ASK-cullin-F-box) protein ligase complex. Interacts with SKP1A/ASK1, SKP1B/ASK2, ASK3, ASK9, ASK11, ASK12, ASK13, ASK14, ASK16 and ASK18.

Its pathway is protein modification; protein ubiquitination. Functionally, component of SCF(ASK-cullin-F-box) E3 ubiquitin ligase complexes, which may mediate the ubiquitination and subsequent proteasomal degradation of target proteins. The polypeptide is F-box/kelch-repeat protein At3g61590 (Arabidopsis thaliana (Mouse-ear cress)).